Reading from the N-terminus, the 92-residue chain is Large ribosomal subunit protein eL31 (92 aa).

It belongs to the eukaryotic ribosomal protein eL31 family.

This Desulfurococcus amylolyticus (strain DSM 18924 / JCM 16383 / VKM B-2413 / 1221n) (Desulfurococcus kamchatkensis) protein is Large ribosomal subunit protein eL31.